The following is a 98-amino-acid chain: uncharacterized protein (98 aa).

This is an uncharacterized protein from Dictyostelium discoideum (Social amoeba).